The following is a 399-amino-acid chain: Exodeoxyribonuclease 7 large subunit (399 aa).

This sequence belongs to the XseA family. In terms of assembly, heterooligomer composed of large and small subunits.

The protein resides in the cytoplasm. The enzyme catalyses Exonucleolytic cleavage in either 5'- to 3'- or 3'- to 5'-direction to yield nucleoside 5'-phosphates.. Functionally, bidirectionally degrades single-stranded DNA into large acid-insoluble oligonucleotides, which are then degraded further into small acid-soluble oligonucleotides. This is Exodeoxyribonuclease 7 large subunit from Clostridium beijerinckii (strain ATCC 51743 / NCIMB 8052) (Clostridium acetobutylicum).